Here is a 213-residue protein sequence, read N- to C-terminus: Phosphoribosyl-dephospho-CoA transferase (213 aa).

Active-site residues include D135 and D137.

Belongs to the MdcG family.

It catalyses the reaction apo-[malonate decarboxylase ACP] + 2'-(5''-triphospho-alpha-D-ribosyl)-3'-dephospho-CoA = holo-[malonate decarboxylase ACP] + diphosphate. Its function is as follows. Transfers 2'-(5-triphosphoribosyl)-3'-dephosphocoenzyme-A to the apo-[acyl-carrier-protein] of the malonate decarboxylase to yield holo-[acyl-carrier-protein]. This Xanthomonas euvesicatoria pv. vesicatoria (strain 85-10) (Xanthomonas campestris pv. vesicatoria) protein is Phosphoribosyl-dephospho-CoA transferase.